The chain runs to 561 residues: Putative transport protein YbjL (561 aa).

The next 5 membrane-spanning stretches (helical) occupy residues 8–28, 32–52, 66–86, 94–114, and 158–178; these read LLNGNYILLLFVVLTLGLCLG, LGSIQLGNSIGVLVVSLLLGQ, FMLFIFCVGVEAGPNFFSIFF, MLALVMVGSALVIALGLGKLF, and NLSLGYALTYLIGLVSLIVGA. RCK C-terminal domains lie at 200–288 and 292–373; these read RGLD…SFRN and VFDR…RIGF. Transmembrane regions (helical) follow at residues 383-403, 406-426, 451-471, 475-495, and 540-560; these read LLAFCAFFVIGLMIGMITFQF, FSFGMGNAAGLLFAGIMLGFM, VFMAGVGLSAGSGINNGLGAI, MLIAGLIVSLVPVVICFLFGA, and AIANVLLTLAGTIIVMVWPGL.

It belongs to the AAE transporter (TC 2.A.81) family. YbjL subfamily.

It is found in the cell membrane. This chain is Putative transport protein YbjL, found in Shigella sonnei (strain Ss046).